An 830-amino-acid chain; its full sequence is P-selectin (830 aa).

The N-terminal stretch at 1 to 41 (MANCQIAILYQRFQRVVFGISQLLCFSALISELTNQKEVAA) is a signal peptide. The Extracellular segment spans residues 42–771 (WTYHYSTKAY…QAGPLTIQEA (730 aa)). N-linked (GlcNAc...) asparagine glycosylation is found at N54 and N98. The C-type lectin domain occupies 58-158 (KYCQNRYTDL…HCLKKKHALC (101 aa)). Cystine bridges form between C60/C158, C131/C150, C163/C174, C168/C183, C185/C194, C200/C244, C230/C257, C262/C306, C292/C319, C324/C368, C354/C381, C386/C430, C416/C443, C448/C492, C478/C505, C510/C554, C540/C567, C572/C616, C602/C629, C642/C686, C672/C699, C704/C748, and C734/C761. Residues E121, N123, and N124 each coordinate Ca(2+). N123 is an a carbohydrate binding site. E133 and N146 together coordinate a carbohydrate. The Ca(2+) site is built by N146 and D147. In terms of domain architecture, EGF-like spans 159 to 195 (YTASCQDMSCSKQGECLETIGNYTCSCYPGFYGPECE). N-linked (GlcNAc...) asparagine glycosylation occurs at N180. Sushi domains are found at residues 198 to 259 (RECG…QCLA), 260 to 321 (AQCP…VCKA), 322 to 383 (VQCQ…TCEA), 384 to 445 (ISCE…VCQA), 446 to 507 (LQCQ…ECQA), 508 to 569 (IPCT…MCEA), 570 to 631 (IKCP…TCKG), 640 to 701 (VQCP…ACRA), and 702 to 763 (VKCS…TCQA). N212 and N219 each carry an N-linked (GlcNAc...) asparagine glycan. An N-linked (GlcNAc...) asparagine glycan is attached at N411. N460 carries an N-linked (GlcNAc...) asparagine glycan. N-linked (GlcNAc...) asparagine glycosylation is present at N518. N-linked (GlcNAc...) asparagine glycosylation occurs at N665. N-linked (GlcNAc...) asparagine glycans are attached at residues N716, N723, and N741. The helical transmembrane segment at 772–795 (LTYFGGAVASTIGLIMGGTLLALL) threads the bilayer. Residues 796–830 (RKRFRQKDDGKCPLNPHSHLGTYGVFTNAAFDPSP) lie on the Cytoplasmic side of the membrane. C807 is lipidated: S-palmitoyl cysteine; alternate. C807 carries S-stearoyl cysteine; alternate lipidation. The Endocytosis signal signature appears at 818-821 (YGVF). The interaction with SNX17 stretch occupies residues 821–830 (FTNAAFDPSP).

It belongs to the selectin/LECAM family. In terms of assembly, interacts with SNX17. Interacts with SELPLG/PSGL1 and PODXL2 and mediates neutrophil adhesion and leukocyte rolling. This interaction requires the sialyl-Lewis X epitope of SELPLG and PODXL2, and specific tyrosine sulfation on SELPLG. Interacts (via C-type lectin domain) with alpha-IIb/beta3 integrin ITGA2B:ITGB3 and alpha-V/beta-3 integrin ITGAV:ITGB3. Interacts with alpha5/beta1 integrin ITGA5:ITGB1 and alpha4/beta1 integrin ITGA4:ITGB. Stored in the alpha-granules of platelets and Weibel-Palade bodies of endothelial cells. Upon cell activation by agonists, P-selectin is transported rapidly to the cell surface.

The protein resides in the cell membrane. In terms of biological role, ca(2+)-dependent receptor for myeloid cells that binds to carbohydrates on neutrophils and monocytes. Mediates the interaction of activated endothelial cells or platelets with leukocytes. The ligand recognized is sialyl-Lewis X. Mediates rapid rolling of leukocyte rolling over vascular surfaces during the initial steps in inflammation through interaction with SELPLG. Mediates cell-cell interactions and cell adhesion via the interaction with integrin alpha-IIb/beta3 (ITGA2B:ITGB3) and integrin alpha-V/beta-3 (ITGAV:ITGB3). This chain is P-selectin (SELP), found in Homo sapiens (Human).